Reading from the N-terminus, the 407-residue chain is Serine/threonine transporter SstT (407 aa).

Transmembrane regions (helical) follow at residues 10 to 30, 42 to 62, 81 to 101, 141 to 161, 179 to 199, 218 to 238, 245 to 267, 288 to 308, and 316 to 336; these read AKGN…LIGI, LGIL…FILI, IIIL…LANF, ALSS…GAAL, VLKI…GLVA, ILLV…IVFF, FPLI…SSAA, ISIP…IAIL, and VGIE…TFAA.

It belongs to the dicarboxylate/amino acid:cation symporter (DAACS) (TC 2.A.23) family.

It localises to the cell inner membrane. The enzyme catalyses L-serine(in) + Na(+)(in) = L-serine(out) + Na(+)(out). It carries out the reaction L-threonine(in) + Na(+)(in) = L-threonine(out) + Na(+)(out). Its function is as follows. Involved in the import of serine and threonine into the cell, with the concomitant import of sodium (symport system). The protein is Serine/threonine transporter SstT of Campylobacter jejuni subsp. doylei (strain ATCC BAA-1458 / RM4099 / 269.97).